We begin with the raw amino-acid sequence, 422 residues long: MQCSFLTIFIFITTVTVGVAEFSEQYQGSSSRLTRHLLEKHNKCSPPDGRVDISHNIELVHIIGINELNQNMQVLVYIVQQWTDASLSWKVEEFRGIKHTWLPEHSIWIPDIIVFNTLEHKMLLEAVRSPIKVSYTGEVTYAYPAIYTVLCQIGIATFPFDDQVCKIRFASWAYDEDKILLNASHKPLLKNYSPNEEWALQDVDMARKEYEHEETVVSEIIYYIKVARKPFYYLISLVVPSYIICVLSIAGLFARFSTKHERQERFTLGVTAILSMAVLSLVVTEKVPHSSENVPLLIVYMHFIIVMVTIATILTSTVMRVHAKGFRTHFLSPPNWIRKVLLIARKHANFFQQHGKVYMDIHTTAEQWGEVSRRMDYLLASVFIIIISTPTLYLFYMCFQMDHATAERVLLENAKRRDQLYY.

A signal peptide spans 1–20 (MQCSFLTIFIFITTVTVGVA). Over 21-233 (EFSEQYQGSS…IKVARKPFYY (213 aa)) the chain is Extracellular. An intrachain disulfide couples C151 to C165. The next 3 helical transmembrane spans lie at 234–254 (LISL…GLFA), 268–288 (LGVT…EKVP), and 294–314 (VPLL…ATIL). Residues 315–378 (TSTVMRVHAK…GEVSRRMDYL (64 aa)) are Cytoplasmic-facing. Residues 379 to 399 (LASVFIIIISTPTLYLFYMCF) form a helical membrane-spanning segment.

It belongs to the ligand-gated ion channel (TC 1.A.9) family. Acetylcholine receptor (TC 1.A.9.1) subfamily. As to quaternary structure, the functional channel is a hetero-oligomer of pbo-5 and pbo-6. As to expression, expressed in the posterior body muscles.

The protein resides in the membrane. Forms a proton-gated ion channel with pbo-5 that is activated by acidification of the posterior coelomic space, leading to posterior body wall muscle contraction (pBoc) during the defecation cycle. Not necessary for stimulation of posterior body contraction (pBoc). Does not bind neurotransmitters such as acetylcholine, gamma-aminobutyric acid, glycine, serotonin, glutamate or choline. In Caenorhabditis elegans, this protein is Proton-gated ion channel subunit pbo-6.